The chain runs to 94 residues: Integration host factor subunit beta (94 aa).

The protein belongs to the bacterial histone-like protein family. In terms of assembly, heterodimer of an alpha and a beta chain.

In terms of biological role, this protein is one of the two subunits of integration host factor, a specific DNA-binding protein that functions in genetic recombination as well as in transcriptional and translational control. This chain is Integration host factor subunit beta, found in Nitrosospira multiformis (strain ATCC 25196 / NCIMB 11849 / C 71).